We begin with the raw amino-acid sequence, 70 residues long: Envelope small membrane protein (70 aa).

Gly-2 carries N-myristoyl glycine; by host lipidation. An endoplasmic reticulum retention signal region spans residues 2–15 (GSLWSKISQLFVDA). Residues 2 to 25 (GSLWSKISQLFVDAFTEFLVSVVD) lie on the Virion surface side of the membrane. The chain crosses the membrane as a helical span at residues 26 to 46 (IVIFLAILFGFTVAGWLLVFL). Residues 47–70 (LRVVCSALLRSRSAIHSPELSKVL) lie on the Intravirion side of the membrane.

Belongs to the arteriviridae E protein family. As to quaternary structure, homooligomer. Associates with itself into higher-order structures, including dimers, trimers and tetramers. Associates with the GP2b-GP3-GP4 complex. Myristoylated. In terms of processing, not glycosylated.

The protein localises to the virion membrane. Its subcellular location is the host endoplasmic reticulum membrane. The protein resides in the host Golgi apparatus membrane. It is found in the secreted. Functionally, minor envelope protein. May function as a viroporin in the virion envelope that facilitates uncoating of the virus in order to release the genomic RNA into the cytoplasm for subsequent replication. In Sus scrofa (Pig), this protein is Envelope small membrane protein (GP2b).